We begin with the raw amino-acid sequence, 103 residues long: Large ribosomal subunit protein bL21 (103 aa).

This sequence belongs to the bacterial ribosomal protein bL21 family. As to quaternary structure, part of the 50S ribosomal subunit. Contacts protein L20.

In terms of biological role, this protein binds to 23S rRNA in the presence of protein L20. The polypeptide is Large ribosomal subunit protein bL21 (Variovorax paradoxus (strain S110)).